The following is a 114-amino-acid chain: Ribonuclease U2 (114 aa).

Intrachain disulfides connect cysteine 1–cysteine 54, cysteine 9–cysteine 113, and cysteine 55–cysteine 96. Aspartate 29, valine 30, alanine 31, asparagine 32, aspartate 37, and tyrosine 39 together coordinate Ca(2+). 39–49 provides a ligand contact to substrate; sequence YPHQYYDEASE. Histidine 41 is a catalytic residue. Glutamate 62 (proton acceptor) is an active-site residue. Arginine 85 is a binding site for substrate. The active-site Proton donor is the histidine 101. 108 to 110 is a binding site for substrate; that stretch reads DGF.

The protein belongs to the ribonuclease U2 family.

It carries out the reaction [RNA] containing adenosine + H2O = an [RNA fragment]-3'-adenosine-3'-phosphate + a 5'-hydroxy-ribonucleotide-3'-[RNA fragment].. It catalyses the reaction [RNA] containing guanosine + H2O = an [RNA fragment]-3'-guanosine-3'-phosphate + a 5'-hydroxy-ribonucleotide-3'-[RNA fragment].. This Ustilago sphaerogena (Smut fungus) protein is Ribonuclease U2 (RNU2).